The primary structure comprises 330 residues: MTHTLRVIFAGTPEFAAAALAAIHEAGFPVPLVLTQPDRPAGRGMKLQASAVKRYAVEHGMTVAQPPSLRRAGKYPAEAADAIELLRTTQHDVMVVAAYGLLLPQEVLDIPRAGCINIHASLLPRWRGAAPIHRAIEAGDAETGVTLMQMDVGLDTGAMIEEARIAIAPDDTTATLHDRLAADGARLIVDALVRLERDGTLPATPQPADGVTYAEKIGKHEAALDWRKPADVLARQVRAFDPFPGGVATLDGAAIKLWAAEPVAARGTMANAAPGTIVEAAPEGVVVACGSGALRVTQLQKPGGKRLPAREFLAGSPLAAGQRFALPDVD.

(6S)-5,6,7,8-tetrahydrofolate is bound at residue 121–124 (SLLP).

Belongs to the Fmt family.

The catalysed reaction is L-methionyl-tRNA(fMet) + (6R)-10-formyltetrahydrofolate = N-formyl-L-methionyl-tRNA(fMet) + (6S)-5,6,7,8-tetrahydrofolate + H(+). In terms of biological role, attaches a formyl group to the free amino group of methionyl-tRNA(fMet). The formyl group appears to play a dual role in the initiator identity of N-formylmethionyl-tRNA by promoting its recognition by IF2 and preventing the misappropriation of this tRNA by the elongation apparatus. The protein is Methionyl-tRNA formyltransferase of Burkholderia cenocepacia (strain ATCC BAA-245 / DSM 16553 / LMG 16656 / NCTC 13227 / J2315 / CF5610) (Burkholderia cepacia (strain J2315)).